A 441-amino-acid polypeptide reads, in one-letter code: Trigger factor (441 aa).

Residues 163 to 248 (GDQVVFDFVG…IKEVKKPVPA (86 aa)) form the PPIase FKBP-type domain.

The protein belongs to the FKBP-type PPIase family. Tig subfamily.

It localises to the cytoplasm. The catalysed reaction is [protein]-peptidylproline (omega=180) = [protein]-peptidylproline (omega=0). Its function is as follows. Involved in protein export. Acts as a chaperone by maintaining the newly synthesized protein in an open conformation. Functions as a peptidyl-prolyl cis-trans isomerase. This is Trigger factor from Jannaschia sp. (strain CCS1).